The primary structure comprises 7639 residues: Nonribosomal peptide synthetase 4 (7639 aa).

The tract at residues 244–636 is adenylation 1; sequence WQGAMRPDAE…AGRKDAQIKF (393 aa). In terms of domain architecture, Carrier 1 spans 776–852; sequence TFSNGTESQL…ALARHVKEIE (77 aa). Ser813 carries the post-translational modification O-(pantetheine 4'-phosphoryl)serine. The segment at 865 to 1295 is epimerization 1; it reads FELSPIQRLY…EQNLSLLVES (431 aa). A condensation 1 region spans residues 1337–1767; that stretch reads VEDIYPCSPM…HLGPRHHQQI (431 aa). The tract at residues 1786–2181 is adenylation 2; sequence FEEQAILRPE…FGRKDTQVKL (396 aa). A Carrier 2 domain is found at 2313–2389; the sequence is APASDMEKQL…DMAQSALPLS (77 aa). Ser2350 carries the O-(pantetheine 4'-phosphoryl)serine modification. A condensation 2 region spans residues 2426-2852; that stretch reads VEDIYPCTPL…LISTRDYQSL (427 aa). The tract at residues 2878-3269 is adenylation 3; the sequence is QPLDKLAVCA…QGRKDNQVKI (392 aa). The region spanning 3403 to 3479 is the Carrier 3 domain; sequence REATETETKL…KLASFVQAVE (77 aa). O-(pantetheine 4'-phosphoryl)serine is present on Ser3440. The epimerization 2 stretch occupies residues 3491–3928; the sequence is AFPLSPIQKL…RMTQAKAEPQ (438 aa). The interval 3961-4389 is condensation 3; it reads EAVYPCSPVQ…VSDDCAQQLT (429 aa). The adenylation 4 stretch occupies residues 4407–4810; the sequence is FERNVQSLPH…VSRKDTQIKL (404 aa). Positions 4944–5020 constitute a Carrier 4 domain; it reads APTTMMQRKL…EMATCCGHSE (77 aa). At Ser4981 the chain carries O-(pantetheine 4'-phosphoryl)serine. A condensation 4 region spans residues 5058–5478; it reads QDLYPCSSLQ…QFCSEEDLQM (421 aa). The segment at 5498 to 5900 is adenylation 5; that stretch reads FWQSVATYHD…IGRKDNQVKL (403 aa). In terms of domain architecture, Carrier 5 spans 6039 to 6115; the sequence is TDTTFVGQLL…DLVTLIEKEG (77 aa). An O-(pantetheine 4'-phosphoryl)serine modification is found at Ser6076. The epimerization 3 stretch occupies residues 6133 to 6567; the sequence is FALSPIQQLF…EVLGNMAMEL (435 aa). Residues 6607–7032 form a condensation 5 region; it reads VEDMYPCSPM…EALSHLRVSQ (426 aa). A Carrier 6 domain is found at 7088–7164; that stretch reads RDKDQVYNKL…TLLNCLRDKS (77 aa). Position 7125 is an O-(pantetheine 4'-phosphoryl)serine (Ser7125). Residues 7254–7603 are condensation 6; the sequence is LDGEGPLDVA…SNTEVCFLYR (350 aa).

The protein belongs to the NRP synthetase family.

The catalysed reaction is D-allo-threonine + D-leucine + D-alanine + L-proline + 2 L-leucine + A = fusahexin + AH2 + 6 H2O. It functions in the pathway secondary metabolite biosynthesis. In terms of biological role, nonribosomal peptide synthetase; part of the gene cluster that mediates the biosynthesis of the fusahexin, a cyclic hydrophobic hexapeptide with the amino acid sequence cyclo-(D-Ala-L-Leu-D-allo-Thr-L-Pro-D-Leu-L-Leu) that plays an important role in cell surface hydrophobicity. Fusahexin might also play a role in virulence, sensitivity to osmotic stress and oxidative stress. NRPS4 is the only enzyme within the cluster and its 5 catalytic modules are sufficient to produce fusahexin. The modules 1 to 4 incorporate respectively D-alanine, L-leucine, D-allo-threonine, and L-proline, which is supported by the presence of epimerase domains in modules 1 and 3, which incorporate D-amino acids. The terminal module is responsible for incorporation of the two adjacent leucine units, where the epimerase domain is only used to convert the first unit to D-leucine. The terminal condensation domain (Ct) is involved in cyclization with D-alanine and thereby releasing of fusahexin. This chain is Nonribosomal peptide synthetase 4, found in Gibberella zeae (strain ATCC MYA-4620 / CBS 123657 / FGSC 9075 / NRRL 31084 / PH-1) (Wheat head blight fungus).